We begin with the raw amino-acid sequence, 736 residues long: DNA topoisomerase 1 (736 aa).

The Toprim domain occupies 2–113; it reads KHLIIVESPA…SYPRIVFHEI (112 aa). Residues Glu8 and Asp82 each coordinate Mg(2+). One can recognise a Topo IA-type catalytic domain in the interval 129-552; it reads DMSKVNAQQA…DFYYPFMDKI (424 aa). The interval 163-168 is interaction with DNA; sequence SAGRVQ. The active-site O-(5'-phospho-DNA)-tyrosine intermediate is Tyr297. 4 consecutive C4-type zinc fingers follow at residues 572-598, 616-642, 663-689, and 702-725; these read CPKC…YPKC, CEKC…YPEC, CPEC…YPKC, and CEKC…CIKC.

The protein belongs to the type IA topoisomerase family. As to quaternary structure, monomer. The cofactor is Mg(2+).

It carries out the reaction ATP-independent breakage of single-stranded DNA, followed by passage and rejoining.. Releases the supercoiling and torsional tension of DNA, which is introduced during the DNA replication and transcription, by transiently cleaving and rejoining one strand of the DNA duplex. Introduces a single-strand break via transesterification at a target site in duplex DNA. The scissile phosphodiester is attacked by the catalytic tyrosine of the enzyme, resulting in the formation of a DNA-(5'-phosphotyrosyl)-enzyme intermediate and the expulsion of a 3'-OH DNA strand. The free DNA strand then undergoes passage around the unbroken strand, thus removing DNA supercoils. Finally, in the religation step, the DNA 3'-OH attacks the covalent intermediate to expel the active-site tyrosine and restore the DNA phosphodiester backbone. This Helicobacter pylori (strain ATCC 700392 / 26695) (Campylobacter pylori) protein is DNA topoisomerase 1.